We begin with the raw amino-acid sequence, 129 residues long: Small ribosomal subunit protein uS11 (129 aa).

This sequence belongs to the universal ribosomal protein uS11 family. In terms of assembly, part of the 30S ribosomal subunit. Interacts with proteins S7 and S18. Binds to IF-3.

In terms of biological role, located on the platform of the 30S subunit, it bridges several disparate RNA helices of the 16S rRNA. Forms part of the Shine-Dalgarno cleft in the 70S ribosome. In Dechloromonas aromatica (strain RCB), this protein is Small ribosomal subunit protein uS11.